Reading from the N-terminus, the 561-residue chain is Arginine--tRNA ligase (561 aa).

Residues 119 to 129 (PNIAKPMSMGH) carry the 'HIGH' region motif.

The protein belongs to the class-I aminoacyl-tRNA synthetase family. Monomer.

Its subcellular location is the cytoplasm. It carries out the reaction tRNA(Arg) + L-arginine + ATP = L-arginyl-tRNA(Arg) + AMP + diphosphate. This Lactobacillus acidophilus (strain ATCC 700396 / NCK56 / N2 / NCFM) protein is Arginine--tRNA ligase.